A 477-amino-acid polypeptide reads, in one-letter code: UDP-sulfoquinovose synthase, chloroplastic (477 aa).

The interval 1-21 (MAHLLSASCPSVISLSSSSSK) is disordered. The transit peptide at 1–86 (MAHLLSASCP…TNNSSSKPKR (86 aa)) directs the protein to the chloroplast. NAD(+) is bound by residues 95 to 96 (YC), 115 to 119 (DNLVR), 158 to 159 (DI), R184, and N202. R184 provides a ligand contact to substrate. Residues T228 and Y265 each coordinate substrate. T228 is an active-site residue. The NAD(+) site is built by Y265 and K269. Y265 (proton acceptor) is an active-site residue. K269 is an active-site residue. Residue Q292 participates in substrate binding. An NAD(+)-binding site is contributed by V295. Residues 322-325 (ALNR), 337-339 (TVY), and 410-412 (RVE) each bind substrate.

This sequence belongs to the NAD(P)-dependent epimerase/dehydratase family. Homodimer. It depends on NAD(+) as a cofactor.

The protein localises to the plastid. Its subcellular location is the chloroplast. It carries out the reaction sulfite + UDP-alpha-D-glucose + H(+) = UDP-alpha-D-6-sulfoquinovose + H2O. Its activity is regulated as follows. Concentrations above 100 uM sulfite inhibit the reaction. Its function is as follows. Involved in the biosynthesis of sulfolipids found in thylakoid membranes. Converts UDP-glucose and sulfite to the sulfolipid head group precursor UDP-sulfoquinovose. In Arabidopsis thaliana (Mouse-ear cress), this protein is UDP-sulfoquinovose synthase, chloroplastic (SQD1).